A 61-amino-acid polypeptide reads, in one-letter code: Small ribosomal subunit protein uS14 (61 aa).

Residues C24, C27, C40, and C43 each contribute to the Zn(2+) site.

The protein belongs to the universal ribosomal protein uS14 family. Zinc-binding uS14 subfamily. As to quaternary structure, part of the 30S ribosomal subunit. Contacts proteins S3 and S10. Zn(2+) serves as cofactor.

Binds 16S rRNA, required for the assembly of 30S particles and may also be responsible for determining the conformation of the 16S rRNA at the A site. The protein is Small ribosomal subunit protein uS14 of Symbiobacterium thermophilum (strain DSM 24528 / JCM 14929 / IAM 14863 / T).